Reading from the N-terminus, the 229-residue chain is NAD-dependent protein deacetylase (229 aa).

A Deacetylase sirtuin-type domain is found at 1 to 229 (MNKLNEALKK…SDAVKVFEEI (229 aa)). 10 residues coordinate NAD(+): Ala20, Arg32, Gln96, Ile98, Asp99, His114, Thr181, Ser182, Asn205, and Val223. Residues Ile98 and Asp99 each contribute to the nicotinamide site. His114 acts as the Proton acceptor in catalysis.

It belongs to the sirtuin family. Class U subfamily.

The protein resides in the cytoplasm. It carries out the reaction N(6)-acetyl-L-lysyl-[protein] + NAD(+) + H2O = 2''-O-acetyl-ADP-D-ribose + nicotinamide + L-lysyl-[protein]. NAD-dependent protein deacetylase which modulates the activities of several enzymes which are inactive in their acetylated form. The protein is NAD-dependent protein deacetylase of Listeria monocytogenes serovar 1/2a (strain ATCC BAA-679 / EGD-e).